The primary structure comprises 80 residues: Small ribosomal subunit protein bS16 (80 aa).

This sequence belongs to the bacterial ribosomal protein bS16 family.

The chain is Small ribosomal subunit protein bS16 from Nitrosococcus oceani (strain ATCC 19707 / BCRC 17464 / JCM 30415 / NCIMB 11848 / C-107).